The chain runs to 264 residues: Proteasome subunit alpha type-4 (264 aa).

The protein belongs to the peptidase T1A family. The 26S proteasome consists of a 20S proteasome core and two 19S regulatory subunits. The 20S proteasome core is composed of 28 subunits that are arranged in four stacked rings, resulting in a barrel-shaped structure. The two end rings are each formed by seven alpha subunits, and the two central rings are each formed by seven beta subunits. The catalytic chamber with the active sites is on the inside of the barrel. Interacts with PI31.

It localises to the cytoplasm. The protein localises to the nucleus. Functionally, the proteasome is a multicatalytic proteinase complex which is characterized by its ability to cleave peptides with Arg, Phe, Tyr, Leu, and Glu adjacent to the leaving group at neutral or slightly basic pH. The proteasome has an ATP-dependent proteolytic activity. This chain is Proteasome subunit alpha type-4 (Prosalpha3), found in Drosophila melanogaster (Fruit fly).